We begin with the raw amino-acid sequence, 704 residues long: Arylphorin (704 aa).

The first 16 residues, 1–16, serve as a signal peptide directing secretion; sequence MKIVLVLAGLIALVQS. N73, N212, and N360 each carry an N-linked (GlcNAc...) asparagine glycan.

This sequence belongs to the hemocyanin family. As to quaternary structure, homohexamer of two stacked trimers; disulfide-linked. Post-translationally, glycosylation at Asn-360 is required for proper folding.

Its subcellular location is the secreted. The protein resides in the extracellular space. Its function is as follows. Arylphorin is a larval storage protein (LSP) which may serve as a storage protein used primarily as a source of aromatic amino acids for protein synthesis during metamorphosis. It is a constituent of the sclerotizing system of the cuticle, and serves as a carrier for ecdysteroid hormone. This Antheraea pernyi (Chinese oak silk moth) protein is Arylphorin.